We begin with the raw amino-acid sequence, 378 residues long: Cytochrome b (378 aa).

The next 4 membrane-spanning stretches (helical) occupy residues 34-54 (FGSL…FLAM), 78-99 (WLLR…YLHV), 114-134 (WLIG…GYVL), and 179-199 (FFTF…IHLL). Positions 84 and 98 each coordinate heme b. Residues His-183 and His-197 each contribute to the heme b site. His-202 contributes to the a ubiquinone binding site. Transmembrane regions (helical) follow at residues 227–247 (FKDI…VLIS), 289–309 (LGGV…PFYN), 321–341 (INQV…WIGA), and 348–368 (YVLI…VNPL).

Belongs to the cytochrome b family. The main subunits of complex b-c1 are: cytochrome b, cytochrome c1 and the Rieske protein. The cofactor is heme b.

The protein resides in the mitochondrion inner membrane. Its function is as follows. Component of the ubiquinol-cytochrome c reductase complex (complex III or cytochrome b-c1 complex) that is part of the mitochondrial respiratory chain. The b-c1 complex mediates electron transfer from ubiquinol to cytochrome c. Contributes to the generation of a proton gradient across the mitochondrial membrane that is then used for ATP synthesis. In Drosophila mauritiana (Fruit fly), this protein is Cytochrome b (mt:Cyt-b).